Reading from the N-terminus, the 312-residue chain is Structure-specific endonuclease subunit SLX1 (312 aa).

The GIY-YIG domain maps to 9–92 (DFYGCYLLQS…QHGYQTRYIK (84 aa)). Residues 219 to 282 (CQFCNKIIKH…IPQSPKCPKC (64 aa)) form an SLX1-type zinc finger.

Belongs to the SLX1 family. In terms of assembly, forms a heterodimer with SLX4. The cofactor is a divalent metal cation.

It is found in the nucleus. In terms of biological role, catalytic subunit of the SLX1-SLX4 structure-specific endonuclease that resolves DNA secondary structures generated during DNA repair and recombination. Has endonuclease activity towards branched DNA substrates, introducing single-strand cuts in duplex DNA close to junctions with ss-DNA. The protein is Structure-specific endonuclease subunit SLX1 of Candida glabrata (strain ATCC 2001 / BCRC 20586 / JCM 3761 / NBRC 0622 / NRRL Y-65 / CBS 138) (Yeast).